The primary structure comprises 481 residues: UDP-N-acetylmuramate--L-alanine ligase (481 aa).

G115 to T121 contributes to the ATP binding site.

This sequence belongs to the MurCDEF family.

The protein resides in the cytoplasm. The enzyme catalyses UDP-N-acetyl-alpha-D-muramate + L-alanine + ATP = UDP-N-acetyl-alpha-D-muramoyl-L-alanine + ADP + phosphate + H(+). It participates in cell wall biogenesis; peptidoglycan biosynthesis. Functionally, cell wall formation. The sequence is that of UDP-N-acetylmuramate--L-alanine ligase from Rhodospirillum rubrum (strain ATCC 11170 / ATH 1.1.1 / DSM 467 / LMG 4362 / NCIMB 8255 / S1).